The chain runs to 489 residues: Glutamyl-tRNA(Gln) amidotransferase subunit A (489 aa).

Catalysis depends on charge relay system residues K75 and S150. Catalysis depends on S174, which acts as the Acyl-ester intermediate.

Belongs to the amidase family. GatA subfamily. Heterotrimer of A, B and C subunits.

It catalyses the reaction L-glutamyl-tRNA(Gln) + L-glutamine + ATP + H2O = L-glutaminyl-tRNA(Gln) + L-glutamate + ADP + phosphate + H(+). Its function is as follows. Allows the formation of correctly charged Gln-tRNA(Gln) through the transamidation of misacylated Glu-tRNA(Gln) in organisms which lack glutaminyl-tRNA synthetase. The reaction takes place in the presence of glutamine and ATP through an activated gamma-phospho-Glu-tRNA(Gln). The sequence is that of Glutamyl-tRNA(Gln) amidotransferase subunit A from Gloeobacter violaceus (strain ATCC 29082 / PCC 7421).